The chain runs to 401 residues: Imidazolonepropionase (401 aa).

Histidine 70 and histidine 72 together coordinate Fe(3+). Zn(2+)-binding residues include histidine 70 and histidine 72. 4-imidazolone-5-propanoate contacts are provided by arginine 79, tyrosine 142, and histidine 175. Residue tyrosine 142 participates in N-formimidoyl-L-glutamate binding. Position 238 (histidine 238) interacts with Fe(3+). Histidine 238 lines the Zn(2+) pocket. 4-imidazolone-5-propanoate is bound at residue glutamine 241. Residue aspartate 313 coordinates Fe(3+). Residue aspartate 313 coordinates Zn(2+). N-formimidoyl-L-glutamate is bound by residues asparagine 315 and glycine 317. Threonine 318 lines the 4-imidazolone-5-propanoate pocket.

It belongs to the metallo-dependent hydrolases superfamily. HutI family. Zn(2+) serves as cofactor. Requires Fe(3+) as cofactor.

The protein resides in the cytoplasm. It catalyses the reaction 4-imidazolone-5-propanoate + H2O = N-formimidoyl-L-glutamate. Its pathway is amino-acid degradation; L-histidine degradation into L-glutamate; N-formimidoyl-L-glutamate from L-histidine: step 3/3. Functionally, catalyzes the hydrolytic cleavage of the carbon-nitrogen bond in imidazolone-5-propanoate to yield N-formimidoyl-L-glutamate. It is the third step in the universal histidine degradation pathway. The sequence is that of Imidazolonepropionase from Acidiphilium cryptum (strain JF-5).